Reading from the N-terminus, the 1622-residue chain is MEAEVWEAEGYNLVLDSDLYDADGYDVPDPGLLTEKNELTFTEPSQVLPFLTSSQQWQSLTPRARARRLWLLLRTSLHEVVEKEKRAELRAARLTHGLEPLRRLEVAAGLRSVAQDPVGGRFVVLDGAGRLHLHKEDGWAQETLLAPVRLTGLVTVLGPLGAVGRFVGWGPAGLAILRPNLSLLWLSEQGVGRAPGWAPTCCLPVPDLRLLLVAEMNSSLALWQFRSGGRRLVLRGSALHPPPSPTGRLMRLAVAPVPPHHVLRCFAAYGSAVLTFDLHAWTLVDVRRDLHKTTISDLAYCEEVEAMVTASRDSTVKVWEADWQIRMVFVGHTGPVTAMTVLPNTTLVLSASQDGTLRTWDLQAAAQVGEVALGFWGQDKLSRRVGRLLAPVRPGWPVLSLCASSMQLWRVRELYSPLAQLPAKVLHVQVAPALPAPAHQSLPTRLVCACADGSVYLLSAATGRIVSSLLLEPEDCAAAVAYCLPREALWLLTRAGHLVRANAARCPMSVLHRVCPPPPPAPQPCCLHLYSHLTDLEGAFSSWEIVRQHWGELRCSSVACAWKNKNRYLPVVGHTDGTLSVLEWLSSKTVFQTEAHSPGPVVAIASTWNSIVSSGGDLTVKMWRVFPYAEESLSLLRTFSCCYPAVALCALGRRVTAGFEDPDSATYGLVQFGLGDSPRLDHRPQDDPTDHITGLCCCPTLKLYACSSLDCTVRIWTAENRLLRLLQLNGAPQALAFCSNSGDLVLALGSRLCLVSHRLYLPTSYLVKKMCRKAPDVVDDPPLPLMSQESLTSAQLQRLTNLHGAASLSEALSLIHRRRATSQHLVPKEDLDAIVARDRDLQQLRLGLVVPAAQPPPSWQQRQEGFDNYLRLIYGSGLLGMQSGRGSQQWSAGTLRVERETRDVCAVPQAAHCLARAEVSTAAQTVPTALSPQDLGALGQHFSQSPRVTVPIPPTHRRVHSKASQLLARSSLSHYLGISLDLQLQLEQLRGRTTMALDLPSSHLQCRIPLLPKRWDKEPLSSLRGFFPATVQPHKHCLRPICFPGYVPNSAVLQQMWLNAEPGASQDALWLWRPRPSQTQWQRKLLQWMGEKPGEEGEEDKKEEEEEKEDEELDWALASLSPHSNQQLDSWELEDQSAVDWTQEPRRRSCKVARTHPHPWHRHGSLLLDEHYGHLPKFLHFFIYQTWFKKLFPIFSLQAYPEAGTIEGLASLLVALLEKTTWVDRVHILQVLLRLLPNMSSDLQGQLQGLLVHLLNLDQPPSLQDQTQKKFVILALQLLLACSLESRDVVLELMSYFLYSPVHCRPELKKLLHGLGLQDPEGFLFKEMMTWVQGPDLDSKAGLRTCCHQKLEDMIQELQETPSQTSVVSGAPTRASVIPSGTSWSASGIFGRLSQVSEVPLMVVSPAEPHSLAPELQAQRMLAPKRSWGTPQLRLRVLSETLKSFCLEPEARLHPAGPAQLPGEPPPLEETDWSHSQLLDLGPIDALNFFCEQLRAQQRSSLQEKAAHPHPPEPYTVAPVPDMVVPPPREHWYHPILRLQEAKPQRSARSAMRLRGPMRSRLCAGRTLDGPIRTLKLPLPRVEPQPFPLDWPMPPRPLPPRLLQPALQRYFLPADADPDTYS.

WD repeat units lie at residues 187–233 (SEQG…RRLV), 290–329 (LHKTTISDLAYCEEVEAMVTASRDSTVKVWEADWQIRMVF), 331–370 (GHTGPVTAMTVLPNTTLVLSASQDGTLRTWDLQAAAQVGE), 552–592 (ELRC…TVFQ), 594–633 (EAHSPGPVVAIASTWNSIVSSGGDLTVKMWRVFPYAEESL), and 687–726 (DPTDHITGLCCCPTLKLYACSSLDCTVRIWTAENRLLRLL). 2 disordered regions span residues 1090–1112 (GEKPGEEGEEDKKEEEEEKEDEE) and 1453–1472 (LHPAGPAQLPGEPPPLEETD). Positions 1094–1118 (GEEGEEDKKEEEEEKEDEELDWALA) form a coiled coil. The span at 1096 to 1112 (EGEEDKKEEEEEKEDEE) shows a compositional bias: acidic residues.

The protein is WD repeat-containing protein 97 of Homo sapiens (Human).